The primary structure comprises 158 residues: Putative pre-16S rRNA nuclease (158 aa).

The tract at residues 138–158 (ELKPAQQTASRSGAGAGDGGS) is disordered.

It belongs to the YqgF nuclease family.

It is found in the cytoplasm. Its function is as follows. Could be a nuclease involved in processing of the 5'-end of pre-16S rRNA. The chain is Putative pre-16S rRNA nuclease from Synechococcus sp. (strain CC9605).